Consider the following 128-residue polypeptide: QECKCHGTSGSCQFKTCWYVTPDFRAVSTLMRDKLQRAVFVNSRNKNSGAFHPRLNKKRLQRELVYFEKSPDFCEKDPRVDSLGTQGRVCNKTSQQMDNCASLCCGRGHNVLMQTRRERCNCRFHWCC.

Disulfide bonds link cysteine 3/cysteine 17, cysteine 5/cysteine 12, cysteine 74/cysteine 105, cysteine 90/cysteine 100, and cysteine 127/cysteine 128. Serine 9 is lipidated: O-palmitoleoyl serine; by PORCN. The N-linked (GlcNAc...) asparagine glycan is linked to asparagine 91.

Belongs to the Wnt family. Palmitoleoylation is required for efficient binding to frizzled receptors. Depalmitoleoylation leads to Wnt signaling pathway inhibition. In embryo, in dorsal hindbrain; in adults, in brain.

The protein localises to the secreted. Its subcellular location is the extracellular space. The protein resides in the extracellular matrix. Functionally, ligand for members of the frizzled family of seven transmembrane receptors. Probable developmental protein. May be a signaling molecule which affects the development of discrete regions of tissues. Is likely to signal over only few cell diameters. In Xenopus laevis (African clawed frog), this protein is Protein Wnt-10 (wnt10).